The following is a 123-amino-acid chain: Large ribosomal subunit protein uL14 (123 aa).

This sequence belongs to the universal ribosomal protein uL14 family. In terms of assembly, part of the 50S ribosomal subunit. Forms a cluster with proteins L3 and L19. In the 70S ribosome, L14 and L19 interact and together make contacts with the 16S rRNA in bridges B5 and B8.

Functionally, binds to 23S rRNA. Forms part of two intersubunit bridges in the 70S ribosome. This chain is Large ribosomal subunit protein uL14, found in Photorhabdus laumondii subsp. laumondii (strain DSM 15139 / CIP 105565 / TT01) (Photorhabdus luminescens subsp. laumondii).